Consider the following 54-residue polypeptide: U7-ctenitoxin-Pk1a (54 aa).

5 disulfide bridges follow: C3–C17, C10–C23, C14–C52, C16–C37, and C25–C35.

As to expression, expressed by the venom gland.

Its subcellular location is the secreted. Its function is as follows. Blocks voltage-gated sodium channels (Nav). Causes immediate spastic paralysis and death in mice within 1 minute of injection at dose levels of 1.5 ug per mouse. The sequence is that of U7-ctenitoxin-Pk1a from Phoneutria keyserlingi (Brazilian wandering spider).